A 392-amino-acid chain; its full sequence is Na(+)/H(+) antiporter NhaA (392 aa).

The next 11 membrane-spanning stretches (helical) occupy residues 14-34 (AGGL…NSPL), 59-79 (LLLW…GLEV), 95-115 (IFPA…YLLF), 125-145 (GWAI…ALLG), 154-174 (VFLL…IALF), 179-199 (VSLQ…YMNW), 213-233 (LVLW…GVIV), 254-274 (GLHP…NAGV), 287-307 (LLPL…IFLF), 328-348 (IFAV…IASL), and 363-383 (LGIL…LRLA).

The protein belongs to the NhaA Na(+)/H(+) (TC 2.A.33) antiporter family.

It localises to the cell inner membrane. The catalysed reaction is Na(+)(in) + 2 H(+)(out) = Na(+)(out) + 2 H(+)(in). Its function is as follows. Na(+)/H(+) antiporter that extrudes sodium in exchange for external protons. This chain is Na(+)/H(+) antiporter NhaA, found in Yersinia enterocolitica serotype O:8 / biotype 1B (strain NCTC 13174 / 8081).